We begin with the raw amino-acid sequence, 671 residues long: APC membrane recruitment protein 2 (671 aa).

Disordered regions lie at residues 1–24, 76–358, 391–414, and 444–598; these read METSRSRGGGGAVSERGGAGASVG, SGGT…SDPS, EAGPSCDKHVPGPGKPALSKKNPG, and SQTE…PLRT. Composition is skewed to gly residues over residues 7-21 and 126-137; these read RGGGGAVSERGGAGA and GGDSGGGGGGRP. The residue at position 162 (S162) is a Phosphoserine. Positions 171–182 are enriched in basic and acidic residues; that stretch reads GRSENGKGEPVD. Residues S229 and S233 each carry the phosphoserine modification. 3 stretches are compositionally biased toward basic and acidic residues: residues 236–260, 276–286, and 295–307; these read CVKEETPRAAREPEEPSQDAPRDPA, APARSCREAEG, and ARGEDAAGHRRAE. Over residues 342 to 353 the composition is skewed to low complexity; it reads APAAPDPASVDP. S355 and S358 each carry phosphoserine. The segment covering 447 to 458 has biased composition (low complexity); sequence EEQGPEPQEGAA. 2 stretches are compositionally biased toward basic and acidic residues: residues 472–487 and 498–514; these read TPKDTRCVEAAKDASS and IEPHPKEEPKHPEKEQQ.

Belongs to the Amer family. Interacts with APC.

Its subcellular location is the cell membrane. Its function is as follows. Negative regulator of the canonical Wnt signaling pathway involved in neuroectodermal patterning. Acts by specifically binding phosphatidylinositol 4,5-bisphosphate (PtdIns(4,5)P2), translocating to the cell membrane and interacting with key regulators of the canonical Wnt signaling pathway, such as components of the beta-catenin destruction complex. This Homo sapiens (Human) protein is APC membrane recruitment protein 2 (AMER2).